The chain runs to 406 residues: Phosphatidylinositol 5-phosphate 4-kinase type-2 alpha (406 aa).

Residue Ala2 is modified to N-acetylalanine. Thr3 is modified (phosphothreonine). At Ser14 the chain carries Phosphoserine. In terms of domain architecture, PIPK spans Ala33 to Leu405. A required for interaction with PIP5K1A region spans residues Val59 to Asp65. 2 positions are modified to N6-acetyllysine: Lys89 and Lys145. A disordered region spans residues Glu287–Ala328. A compositionally biased stretch (acidic residues) spans Glu289–Ser304.

In terms of assembly, homodimer. Interacts with PIP4K2B; the interaction may regulate localization to the nucleus. Probably interacts with PIP5K1A; the interaction inhibits PIP5K1A kinase activity. Post-translationally, phosphorylated in tyrosines. Phosphorylation is induced by light and increases kinase activity.

It is found in the cell membrane. The protein resides in the nucleus. It localises to the lysosome. The protein localises to the cytoplasm. Its subcellular location is the photoreceptor inner segment. It is found in the cell projection. The protein resides in the cilium. It localises to the photoreceptor outer segment. It catalyses the reaction a 1,2-diacyl-sn-glycero-3-phospho-(1D-myo-inositol-5-phosphate) + ATP = a 1,2-diacyl-sn-glycero-3-phospho-(1D-myo-inositol-4,5-bisphosphate) + ADP + H(+). The catalysed reaction is 1,2-dihexadecanoyl-sn-glycero-3-phospho-(1D-myo-inositol-5-phosphate) + ATP = 1,2-dihexadecanoyl-sn-glycero-3-phospho-(1D-myo-inositol-4,5-bisphosphate) + ADP + H(+). It carries out the reaction 1,2-dihexadecanoyl-sn-glycero-3-phospho-(1D-myo-inositol-5-phosphate) + GTP = 1,2-dihexadecanoyl-sn-glycero-3-phospho-(1D-myo-inositol-4,5-bisphosphate) + GDP + H(+). With respect to regulation, in rod outer segments, activated by light. In terms of biological role, catalyzes the phosphorylation of phosphatidylinositol 5-phosphate (PtdIns5P) on the fourth hydroxyl of the myo-inositol ring, to form phosphatidylinositol 4,5-bisphosphate (PtdIns(4,5)P2). Has both ATP- and GTP-dependent kinase activities. May exert its function by regulating the levels of PtdIns5P, which functions in the cytosol by increasing AKT activity and in the nucleus signals through ING2. May regulate the pool of cytosolic PtdIns5P in response to the activation of tyrosine phosphorylation. Required for lysosome-peroxisome membrane contacts and intracellular cholesterol transport through modulating peroxisomal PtdIns(4,5)P2 level. In collaboration with PIP4K2B, has a role in mediating autophagy in times of nutrient stress. Required for autophagosome-lysosome fusion and the regulation of cellular lipid metabolism. Negatively regulates insulin signaling through a catalytic-independent mechanism. PIP4Ks interact with PIP5Ks and suppress PIP5K-mediated PtdIns(4,5)P2 synthesis and insulin-dependent conversion to PtdIns(3,4,5)P3. May be involved in thrombopoiesis, and the terminal maturation of megakaryocytes and regulation of their size. The sequence is that of Phosphatidylinositol 5-phosphate 4-kinase type-2 alpha from Rattus norvegicus (Rat).